Reading from the N-terminus, the 311-residue chain is Ketoisovalerate oxidoreductase subunit VorB (311 aa).

In terms of assembly, heterotetramer of one alpha, one beta, one delta and one gamma chain.

It carries out the reaction 3-methyl-2-oxobutanoate + 2 oxidized [2Fe-2S]-[ferredoxin] + CoA = 2-methylpropanoyl-CoA + 2 reduced [2Fe-2S]-[ferredoxin] + CO2 + H(+). The protein is Ketoisovalerate oxidoreductase subunit VorB (vorB) of Pyrococcus horikoshii (strain ATCC 700860 / DSM 12428 / JCM 9974 / NBRC 100139 / OT-3).